Here is a 184-residue protein sequence, read N- to C-terminus: ATP synthase subunit b, chloroplastic (184 aa).

A helical membrane pass occupies residues 31-53; sequence LINLAVVIGVLVYFGKGVLTTIL.

This sequence belongs to the ATPase B chain family. As to quaternary structure, F-type ATPases have 2 components, F(1) - the catalytic core - and F(0) - the membrane proton channel. F(1) has five subunits: alpha(3), beta(3), gamma(1), delta(1), epsilon(1). F(0) has four main subunits: a(1), b(1), b'(1) and c(10-14). The alpha and beta chains form an alternating ring which encloses part of the gamma chain. F(1) is attached to F(0) by a central stalk formed by the gamma and epsilon chains, while a peripheral stalk is formed by the delta, b and b' chains.

The protein localises to the plastid. It is found in the chloroplast thylakoid membrane. In terms of biological role, f(1)F(0) ATP synthase produces ATP from ADP in the presence of a proton or sodium gradient. F-type ATPases consist of two structural domains, F(1) containing the extramembraneous catalytic core and F(0) containing the membrane proton channel, linked together by a central stalk and a peripheral stalk. During catalysis, ATP synthesis in the catalytic domain of F(1) is coupled via a rotary mechanism of the central stalk subunits to proton translocation. Component of the F(0) channel, it forms part of the peripheral stalk, linking F(1) to F(0). This chain is ATP synthase subunit b, chloroplastic, found in Staurastrum punctulatum (Green alga).